The primary structure comprises 253 residues: Probable transcriptional regulatory protein KRH_13670 (253 aa).

This sequence belongs to the TACO1 family.

The protein localises to the cytoplasm. In Kocuria rhizophila (strain ATCC 9341 / DSM 348 / NBRC 103217 / DC2201), this protein is Probable transcriptional regulatory protein KRH_13670.